A 253-amino-acid chain; its full sequence is 5'-nucleotidase SurE (253 aa).

A divalent metal cation-binding residues include Asp-8, Asp-9, Ser-39, and Asn-95.

The protein belongs to the SurE nucleotidase family. A divalent metal cation is required as a cofactor.

It is found in the cytoplasm. The catalysed reaction is a ribonucleoside 5'-phosphate + H2O = a ribonucleoside + phosphate. Functionally, nucleotidase that shows phosphatase activity on nucleoside 5'-monophosphates. This Chloroflexus aggregans (strain MD-66 / DSM 9485) protein is 5'-nucleotidase SurE.